The primary structure comprises 196 residues: UPF0200 protein MK0400 (196 aa).

An ATP-binding site is contributed by 7 to 14 (GMPGAGKG).

This sequence belongs to the UPF0200 family.

The chain is UPF0200 protein MK0400 from Methanopyrus kandleri (strain AV19 / DSM 6324 / JCM 9639 / NBRC 100938).